A 468-amino-acid chain; its full sequence is MSSGKIAQVIGPVVDVLFAAGEKLPEINNALVVYKNDERKTKIVLEVALELGDGMVRTIAMESTDGLTRGMEVLDTGRPISVPVGKETLGRVFNVLGDTIDLEAPFTEDAERQPIHKKAPTFDELSTSSEILETGIKVIDLLAPYLKGGKVGLFGGAGVGKTVLIQELIHNIAQEHGGISVFAGVGERTREGNDLYWEMKESGVIEKTAMVFGQMNEPPGARMRVALTGLTIAEYFRDVEGQDVLLFIDNIFRFTQAGSEVSALLGRMPSAVGYQPTLATEMGQLQERITSTKKGSVTSIQAIYVPADDYTDPAPATAFAHLDSTTNLERKLVQLGIYPAVDPLASSSRALAPEIVGEEHYAVAAEVKRVLQRYHELQDIIAILGMDELSDEEKTLVARARRIQFFLSQNFNVAEQFTGQPGSYVPVAETVRGFKEILDGKYDHLPEDAFRGVGSIEDVIAKAEKMGF.

Position 155-162 (155-162 (GGAGVGKT)) interacts with ATP.

It belongs to the ATPase alpha/beta chains family. As to quaternary structure, F-type ATPases have 2 components, CF(1) - the catalytic core - and CF(0) - the membrane proton channel. CF(1) has five subunits: alpha(3), beta(3), gamma(1), delta(1), epsilon(1). CF(0) has three main subunits: a(1), b(2) and c(9-12). The alpha and beta chains form an alternating ring which encloses part of the gamma chain. CF(1) is attached to CF(0) by a central stalk formed by the gamma and epsilon chains, while a peripheral stalk is formed by the delta and b chains.

The protein localises to the cell membrane. The catalysed reaction is ATP + H2O + 4 H(+)(in) = ADP + phosphate + 5 H(+)(out). In terms of biological role, produces ATP from ADP in the presence of a proton gradient across the membrane. The catalytic sites are hosted primarily by the beta subunits. This chain is ATP synthase subunit beta, found in Streptococcus pneumoniae (strain ATCC BAA-255 / R6).